Here is a 662-residue protein sequence, read N- to C-terminus: Sodium/glucose cotransporter 1 (662 aa).

Topologically, residues 1-24 are extracellular; the sequence is MDSSTWSPATTATTEPLKPHERIR. Residues 25–47 traverse the membrane as a helical segment; it reads NAADISVIVIYFVVVMAVGLWAM. Over 48 to 66 the chain is Cytoplasmic; it reads CSTNRGTVGGFFLAGRSMV. A helical membrane pass occupies residues 67–90; sequence WWPVGASLFASNIGSGHFVGLAGT. Topologically, residues 91-95 are extracellular; that stretch reads GAAAG. Residues 96–117 traverse the membrane as a helical segment; it reads IATGGFEWNALIWVVVLGWLFV. Topologically, residues 118 to 139 are cytoplasmic; the sequence is PIYIKAGVVTMPEYLRKRFGGK. Residues 140–169 form a helical membrane-spanning segment; the sequence is RIQVYLSILSLMLYIFTKISADIFSGAIFI. At 170-176 the chain is on the extracellular side; the sequence is TLALGLD. Residues 177-193 form a helical membrane-spanning segment; that stretch reads LYLAIFLLLAITGLYTI. Topologically, residues 194–202 are cytoplasmic; it reads TGGLAAVIY. The chain crosses the membrane as a helical span at residues 203 to 221; sequence TDTLQTAIMLVGSFILTGF. Residues 222-275 are Extracellular-facing; the sequence is AFHEVGGYDAFMEKYMNAIPTVISDGNITIKKECYTPRADSFHIFRDPLKGDLP. Residue N248 is glycosylated (N-linked (GlcNAc...) asparagine). Disulfide bonds link C255–C511, C255–C608, C345–C351, C355–C361, and C517–C522. The chain crosses the membrane as a helical span at residues 276 to 295; it reads WPGLTFGLSILALWYWCTDQ. Residues 296–309 lie on the Cytoplasmic side of the membrane; it reads VIVQRCLSAKNMSH. Residues 310–331 traverse the membrane as a helical segment; sequence VKAGCVMCGYFKLLPMFVIVMP. The Extracellular portion of the chain corresponds to 332–375; the sequence is GMISRVLYTEKIACTVPSECEKYCGTKVGCSNIAYPTLVVELMP. Residues 376 to 406 traverse the membrane as a helical segment; it reads NGLRGLMLSVMLASLMSSLTSIFNSASTLFT. The Cytoplasmic segment spans residues 407 to 422; sequence MDVYTKIRKRASEKEL. Residues 423–444 traverse the membrane as a helical segment; that stretch reads MIAGRLFILVLIGISIAWVPIV. At 445–451 the chain is on the extracellular side; that stretch reads QSAQSGQ. A helical transmembrane segment spans residues 452–477; the sequence is LFDYIQSVTSYLGPPIAAVFLLAIFC. Over 478–481 the chain is Cytoplasmic; that stretch reads KRVN. A helical membrane pass occupies residues 482–504; it reads EEGAFWGLVIGCMIGLARMITEF. Topologically, residues 505–525 are extracellular; that stretch reads AYGTGSCVEPSNCPTIICGVH. The chain crosses the membrane as a helical span at residues 526–547; that stretch reads YLYFAIILFVISIIIVLVVSLF. Residues 548–642 are Cytoplasmic-facing; sequence TKPIPDVHLY…TSEKPLWRTV (95 aa). Phosphothreonine is present on T587. A helical transmembrane segment spans residues 643 to 660; that stretch reads VNINGIILLTVAVFCHAY. At 661 to 662 the chain is on the extracellular side; it reads FA.

This sequence belongs to the sodium:solute symporter (SSF) (TC 2.A.21) family. N-glycosylation is not necessary for the cotransporter function.

The protein localises to the apical cell membrane. It carries out the reaction D-glucose(out) + 2 Na(+)(out) = D-glucose(in) + 2 Na(+)(in). The catalysed reaction is D-galactose(out) + 2 Na(+)(out) = D-galactose(in) + 2 Na(+)(in). Enhanced by the interaction with PDZK1IP1/MAP17; but unlike SLC5A2/SGLT2, PDZK1IP1 is not essential for SLC5A1 transporter activity. Possibly modulated by cholesterol binding. Electrogenic Na(+)-coupled sugar symporter that actively transports D-glucose or D-galactose at the plasma membrane, with a Na(+) to sugar coupling ratio of 2:1. Transporter activity is driven by a transmembrane Na(+) electrochemical gradient set by the Na(+)/K(+) pump. Has a primary role in the transport of dietary monosaccharides from enterocytes to blood. Responsible for the absorption of D-glucose or D-galactose across the apical brush-border membrane of enterocytes, whereas basolateral exit is provided by GLUT2. Additionally, functions as a D-glucose sensor in enteroendocrine cells, triggering the secretion of the incretins GCG and GIP that control food intake and energy homeostasis. Together with SGLT2, functions in reabsorption of D-glucose from glomerular filtrate, playing a nonredundant role in the S3 segment of the proximal tubules. Transports D-glucose into endometrial epithelial cells, controlling glycogen synthesis and nutritional support for the embryo as well as the decidual transformation of endometrium prior to conception. Acts as a water channel enabling passive water transport in response to the osmotic gradient created upon sugar and Na(+) uptake. Has high water conductivity comparable to aquaporins and therefore is expected to play an important role in transepithelial water permeability, especially in the small intestine. This chain is Sodium/glucose cotransporter 1 (SLC5A1), found in Sus scrofa (Pig).